Here is a 523-residue protein sequence, read N- to C-terminus: 3-hydroxybenzoate--CoA/4-hydroxybenzoate--CoA ligase (523 aa).

It belongs to the ATP-dependent AMP-binding enzyme family. Benzoate-CoA ligase subfamily.

The enzyme catalyses 4-hydroxybenzoate + ATP + CoA = 4-hydroxybenzoyl-CoA + AMP + diphosphate. The catalysed reaction is 3-hydroxybenzoate + ATP + CoA = 3-hydroxybenzoyl-CoA + AMP + diphosphate. In terms of biological role, catalyzes the ligation of 3-hydroxybenzoate or 4-hydroxybenzoate and CoA at the expense of ATP. The enzyme shows low activity towards benzoate, 4-aminobenzoate, 3-aminobenzoate, 3-fluorobenzoate, 4-fluorobenzoate, 3-chlorobenzoate, and 4-chlorobenzoate. There is no activity with 3,4-dihydroxybenzoate, 2,3-dihydroxybenzoate, and 2-hydroxybenzoate as substrates. The polypeptide is 3-hydroxybenzoate--CoA/4-hydroxybenzoate--CoA ligase (hcl) (Thauera aromatica).